A 107-amino-acid chain; its full sequence is Rhodocoxin (107 aa).

A 2Fe-2S ferredoxin-type domain is found at 2-106 (PTVTYVHPDG…GLIVRLPEEQ (105 aa)). 4 residues coordinate [2Fe-2S] cluster: Cys-40, Cys-46, Cys-49, and Cys-87.

It belongs to the adrenodoxin/putidaredoxin family. [2Fe-2S] cluster is required as a cofactor.

Ferredoxin-type protein which transfers electrons from rhodocoxin reductase to cytochrome CYP116 (ThcB), which is involved in the degradation of thiocarbamate herbicides. The chain is Rhodocoxin (thcC) from Rhodococcus erythropolis (Arthrobacter picolinophilus).